The chain runs to 174 residues: uncharacterized protein (174 aa).

The protein belongs to the gamma-class carbonic anhydrase family.

This is an uncharacterized protein from Pseudomonas aeruginosa (strain ATCC 15692 / DSM 22644 / CIP 104116 / JCM 14847 / LMG 12228 / 1C / PRS 101 / PAO1).